Reading from the N-terminus, the 82-residue chain is RNA-binding protein GTNG_0100 (82 aa).

This sequence belongs to the eukaryotic ribosomal protein eL8 family.

This Geobacillus thermodenitrificans (strain NG80-2) protein is RNA-binding protein GTNG_0100.